The sequence spans 179 residues: Large ribosomal subunit protein uL6 (179 aa).

It belongs to the universal ribosomal protein uL6 family. Part of the 50S ribosomal subunit.

In terms of biological role, this protein binds to the 23S rRNA, and is important in its secondary structure. It is located near the subunit interface in the base of the L7/L12 stalk, and near the tRNA binding site of the peptidyltransferase center. The polypeptide is Large ribosomal subunit protein uL6 (Rhodococcus jostii (strain RHA1)).